The chain runs to 882 residues: MVEVDSRKQLLYDPIVRLSGIADKFVMQDATSSNMKVSLQECIDTLANYQDECKKLKRNEPTLSPSERYSIYESAYIYYKIIHIMVLTRIPSLPQFSSAKSSDATNEDKELMQIYNMLVKTLLSDEKIAQIKSYLRANYPDKNSKGKESIVNKQLLNNEVFMLPLSGSPISAVQLNHLIQMYDSSLLLIDVRPRAEFDSKHIKAKSVICVEPVSFKNSFTDLEVEKKSLITSPQKEIALFQARDKYNYIVIYTQQSEKTQFYMHQQLVLLDILMNKSFAKPLNEKNIKVFTLDKGFSGWVSKKGACETTTQNGDAIYISGNTSSLNLQNLPQLSPNIGSSMDKSMRDMMSTSADFEGRTYQLPQQQQPVFARTPSFKNLFNKAKSSSTSSVTSSSPAPSQLVRPQTSSMPPLEQNFTQYPETPKLLTQINTNTMPLSQISPISSRAMSPMTKNMLTQSPQLPMKISRTTIGNGAMLDLKPHPDSKPPGQPVPALPQLPHHMTGTYQNLNQPKLDLDFTVGLENMGNSCYMNCIIQCLLSTHELSQIFLNNSYEKHINLNSKLGSKGVLAKYFARLVHTMYREGSFKRPLEKNKPIQPIQFKMACGSINSLFKDNTQQDSQEFCQFLLDGLHEDLNQCGANPPLKELSEDAEKMREKLSMRIASSIEWERFLTTDFSVIVDLFQGQYASQLKCKVCGCTSTTYQTFSVLSVPVPHVSSCHILDCFNEFTKVEKLGTDELWSCPTCKKKQPSTKKLTITRLPRNLIIHLKRFDNMMNKNNVFVKYPFLLDLTPYWANDFDGRLPPGVTDELPTRGQVPPFRYKLNAVASHVGSLYGGHYTAYVNKGINRGWHYFDDTSYRPIKNETECITPNAYVLFYHRVYGV.

Residues 182 to 308 (YDSSLLLIDV…WVSKKGACET (127 aa)) enclose the Rhodanese domain. The span at 382-399 (KAKSSSTSSVTSSSPAPS) shows a compositional bias: low complexity. The disordered stretch occupies residues 382 to 411 (KAKSSSTSSVTSSSPAPSQLVRPQTSSMPP). Over residues 402-411 (VRPQTSSMPP) the composition is skewed to polar residues. A USP domain is found at 519 to 879 (VGLENMGNSC…NAYVLFYHRV (361 aa)). C528 serves as the catalytic Nucleophile. Catalysis depends on H836, which acts as the Proton acceptor.

The protein belongs to the peptidase C19 family.

It is found in the cytoplasm. Its subcellular location is the late endosome membrane. The enzyme catalyses Thiol-dependent hydrolysis of ester, thioester, amide, peptide and isopeptide bonds formed by the C-terminal Gly of ubiquitin (a 76-residue protein attached to proteins as an intracellular targeting signal).. Its activity is regulated as follows. RFU1 is an inhibitor of deubiquitination activity. Its function is as follows. Ubiquitin thioesterase that acts at the late endosome/prevacuolar compartment to recover ubiquitin from ubiquitinated membrane proteins en route to the vacuole. Also removes ubiquitin from soluble proteins targeted to proteasomes. Is essential to maintain a normal level of free ubiquitin. Required for promoting coordination of DNA replication and avoids DNA overreplication. The protein is Ubiquitin carboxyl-terminal hydrolase 4 (DOA4) of Vanderwaltozyma polyspora (strain ATCC 22028 / DSM 70294 / BCRC 21397 / CBS 2163 / NBRC 10782 / NRRL Y-8283 / UCD 57-17) (Kluyveromyces polysporus).